The sequence spans 202 residues: Odorant-binding protein 59a (202 aa).

The signal sequence occupies residues 1 to 20; the sequence is MKQLIFLLICLSCGTCSIYA. Residues 43 to 53 are compositionally biased toward basic and acidic residues; that stretch reads HRQDEDEDRGR. The segment at 43-105 is disordered; the sequence is HRQDEDEDRG…QSDGRNHTSN (63 aa). The segment covering 54-65 has biased composition (gly residues); the sequence is GGQGRQGNGYEY.

This sequence belongs to the PBP/GOBP family. Expressed in non-neuronal cells in hygrosensitive sensilla in the second chamber of the sacculus of the antenna third segment (at protein level).

It localises to the secreted. Odorant-binding protein required for hygrotaxis behavior in humidity-detecting sensilla. This is Odorant-binding protein 59a from Drosophila melanogaster (Fruit fly).